Consider the following 349-residue polypeptide: 2-oxoglutarate-Fe(II) type oxidoreductase ppzD (349 aa).

One can recognise a Fe2OG dioxygenase domain in the interval 200–311 (NTSELRLNHY…RYSVAYFGKP (112 aa)). Fe cation is bound by residues histidine 227, aspartate 229, and histidine 287. Arginine 302 is a binding site for 2-oxoglutarate.

This sequence belongs to the iron/ascorbate-dependent oxidoreductase family. The cofactor is Fe(2+).

It catalyses the reaction L-proline + 2-oxoglutarate + O2 = trans-4-hydroxy-L-proline + succinate + CO2. The catalysed reaction is L-proline + 2-oxoglutarate + O2 = trans-3-hydroxy-L-proline + succinate + CO2. It carries out the reaction D-proline + 2-oxoglutarate + O2 = cis-4-hydroxy-D-proline + succinate + CO2. It functions in the pathway secondary metabolite biosynthesis. In terms of biological role, 2-oxoglutarate-Fe(II) type oxidoreductase; part of the gene cluster that mediates the biosynthesis of pyrrolopyrazines, secondary metabolites showing insecticidal activity. Within the pathway, ppzD converts L-proline into trans-4-hydroxy-L-proline as a major product, yielding a key precursor for peramine biosynthesis. PpzD is also able to convert L-proline into trans-3-hydroxy-L-proline. The single multifunctional NRPS ppzA is sufficient to produce peramine via condensation of 1-pyrroline-5-carboxylate and arginine, N-methylation of the alpha-amino group of arginine and reduction of the thioester and the cyclization to form an iminium ion resulting in release from the peptide synthetase. Deprotonation of this intermediate and oxidation of the pyrroline ring would give rise to peramine. In Epichloe species that produce only peramine, the peramine synthetase gene is not localized in a gene cluster, in contrast to Metarhizium species that contain additional pyrrolopyrazine biosynthesis genes. The 2-oxoglutarate-Fe(II) type oxidoreductase ppzC hydroxylates peramine to yield the newly identified compound 8-hydroxyperamine whereas ppzD converts L-proline into trans-4-hydroxy-L-proline, a precursor of peramine biosynthesis. This Metarhizium majus (strain ARSEF 297) protein is 2-oxoglutarate-Fe(II) type oxidoreductase ppzD (ppzD).